Here is a 166-residue protein sequence, read N- to C-terminus: Putative peroxiredoxin (166 aa).

The Thioredoxin domain maps to 1 to 166; it reads EIGSTIPNAT…SSAATVLSKL (166 aa). Residue C56 is the Cysteine sulfenic acid (-SOH) intermediate of the active site. Positions 164 to 166 match the Microbody targeting signal motif; that stretch reads SKL.

The protein belongs to the peroxiredoxin family. Prx5 subfamily. As to quaternary structure, homodimer; disulfide-linked, upon oxidation.

The enzyme catalyses a hydroperoxide + [thioredoxin]-dithiol = an alcohol + [thioredoxin]-disulfide + H2O. Its function is as follows. Thiol-specific peroxidase that catalyzes the reduction of hydrogen peroxide and organic hydroperoxides to water and alcohols, respectively. Plays a role in cell protection against oxidative stress by detoxifying peroxides and as sensor of hydrogen peroxide-mediated signaling events. The polypeptide is Putative peroxiredoxin (Malassezia furfur (Pityriasis versicolor infection agent)).